The primary structure comprises 365 residues: Flagellar P-ring protein (365 aa).

The N-terminal stretch at methionine 1–alanine 19 is a signal peptide.

It belongs to the FlgI family. In terms of assembly, the basal body constitutes a major portion of the flagellar organelle and consists of four rings (L,P,S, and M) mounted on a central rod.

It localises to the periplasm. Its subcellular location is the bacterial flagellum basal body. In terms of biological role, assembles around the rod to form the L-ring and probably protects the motor/basal body from shearing forces during rotation. The protein is Flagellar P-ring protein of Sodalis glossinidius (strain morsitans).